A 366-amino-acid polypeptide reads, in one-letter code: Quinolinate synthase (366 aa).

Iminosuccinate is bound by residues histidine 44 and serine 61. Cysteine 108 contributes to the [4Fe-4S] cluster binding site. Iminosuccinate-binding positions include 139–141 (YVN) and serine 160. Residue cysteine 228 participates in [4Fe-4S] cluster binding. Iminosuccinate-binding positions include 254 to 256 (HPE) and threonine 271. Cysteine 318 serves as a coordination point for [4Fe-4S] cluster.

It belongs to the quinolinate synthase family. Type 3 subfamily. [4Fe-4S] cluster is required as a cofactor.

The protein resides in the cytoplasm. The catalysed reaction is iminosuccinate + dihydroxyacetone phosphate = quinolinate + phosphate + 2 H2O + H(+). Its pathway is cofactor biosynthesis; NAD(+) biosynthesis; quinolinate from iminoaspartate: step 1/1. Functionally, catalyzes the condensation of iminoaspartate with dihydroxyacetone phosphate to form quinolinate. This Staphylococcus carnosus (strain TM300) protein is Quinolinate synthase.